The chain runs to 552 residues: Cilia- and flagella- associated protein 210 (552 aa).

Coiled-coil stretches lie at residues 53-143 (DEWK…NAKQ), 186-307 (EEQL…KKRL), 348-409 (IARD…VMKA), and 460-488 (TEALVAEKEKEFQDYAREVIELESETTNK). The interval 216–238 (KDHLKQIKEHEEEEERRKKYEEK) is disordered.

As to quaternary structure, microtubule inner protein component of sperm flagellar doublet microtubules. As to expression, expressed in airway epithelial cells.

The protein resides in the cytoplasm. It localises to the cytoskeleton. The protein localises to the cilium axoneme. Its subcellular location is the flagellum axoneme. In terms of biological role, microtubule inner protein (MIP) part of the dynein-decorated doublet microtubules (DMTs) in cilia axoneme, which is required for motile cilia beating. This is Cilia- and flagella- associated protein 210 from Homo sapiens (Human).